Here is a 430-residue protein sequence, read N- to C-terminus: Trigger factor (430 aa).

Positions 157–242 (GDLVALETWS…AVEVSEPVLP (86 aa)) constitute a PPIase FKBP-type domain.

The protein belongs to the FKBP-type PPIase family. Tig subfamily.

It localises to the cytoplasm. The enzyme catalyses [protein]-peptidylproline (omega=180) = [protein]-peptidylproline (omega=0). Functionally, involved in protein export. Acts as a chaperone by maintaining the newly synthesized protein in an open conformation. Functions as a peptidyl-prolyl cis-trans isomerase. This is Trigger factor from Xanthomonas axonopodis pv. citri (strain 306).